A 268-amino-acid polypeptide reads, in one-letter code: MEPCLLMWGILTFITVSGYTTDLCDDDPPNLKHATFKALTYKTGTVLNCDCERGFRRISSYMHCTGNSSHASWENKCRCKSVSPENRKGKVTTKPEEQKGENPTEMQSQTPPMDEVDLVGHCREPPPWEHENSKRIYHFVVGQTLHYQCMQGFTALHRGPAKSICKTIFGKTRWTQPPLKCISESQFPDDEELQASTDAPAGRDTSSPFITTSTPDFHKHTEVATTMESFIFTTEYQIAVASCVLLLISIVLLSGLTWQRRRRKSRTI.

The first 21 residues, 1–21, serve as a signal peptide directing secretion; that stretch reads MEPCLLMWGILTFITVSGYTT. One can recognise a Sushi 1 domain in the interval 22–81; sequence DLCDDDPPNLKHATFKALTYKTGTVLNCDCERGFRRISSYMHCTGNSSHASWENKCRCKS. Residues 22-237 lie on the Extracellular side of the membrane; sequence DLCDDDPPNL…ESFIFTTEYQ (216 aa). Cystine bridges form between Cys24/Cys64, Cys49/Cys77, and Cys51/Cys79. Residue Asn67 is glycosylated (N-linked (GlcNAc...) asparagine). A disordered region spans residues 83–112; it reads SPENRKGKVTTKPEEQKGENPTEMQSQTPP. A compositionally biased stretch (basic and acidic residues) spans 85 to 102; it reads ENRKGKVTTKPEEQKGEN. Residues 120–183 enclose the Sushi 2 domain; it reads GHCREPPPWE…WTQPPLKCIS (64 aa). 2 disulfide bridges follow: Cys122-Cys165 and Cys149-Cys181. The interval 186–213 is disordered; sequence QFPDDEELQASTDAPAGRDTSSPFITTS. Polar residues predominate over residues 204–213; the sequence is DTSSPFITTS. The chain crosses the membrane as a helical span at residues 238–258; it reads IAVASCVLLLISIVLLSGLTW. Residues 259 to 268 are Cytoplasmic-facing; it reads QRRRRKSRTI.

As to quaternary structure, non-covalent dimer of an alpha and a beta subunit. IL2R exists in 3 different forms: a high affinity dimer, an intermediate affinity monomer (beta subunit), and a low affinity monomer (alpha subunit). The high and intermediate affinity forms also associate with a gamma subunit.

It localises to the membrane. Functionally, receptor for interleukin-2. The receptor is involved in the regulation of immune tolerance by controlling regulatory T cells (TREGs) activity. TREGs suppress the activation and expansion of autoreactive T-cells. This is Interleukin-2 receptor subunit alpha (IL2RA) from Canis lupus familiaris (Dog).